The following is a 158-amino-acid chain: Transcription elongation factor GreA (158 aa).

Positions 2-70 (ENQKQYPMTQ…IEQDIQRIEH (69 aa)) form a coiled coil.

It belongs to the GreA/GreB family.

Functionally, necessary for efficient RNA polymerase transcription elongation past template-encoded arresting sites. The arresting sites in DNA have the property of trapping a certain fraction of elongating RNA polymerases that pass through, resulting in locked ternary complexes. Cleavage of the nascent transcript by cleavage factors such as GreA or GreB allows the resumption of elongation from the new 3'terminus. GreA releases sequences of 2 to 3 nucleotides. This is Transcription elongation factor GreA from Staphylococcus epidermidis (strain ATCC 35984 / DSM 28319 / BCRC 17069 / CCUG 31568 / BM 3577 / RP62A).